We begin with the raw amino-acid sequence, 363 residues long: Adenosine kinase (363 aa).

The Mg(2+) site is built by A185, I188, and A191. The active site involves D318.

The protein belongs to the carbohydrate kinase PfkB family. The cofactor is Mg(2+).

The enzyme catalyses adenosine + ATP = AMP + ADP + H(+). The protein operates within purine metabolism; AMP biosynthesis via salvage pathway; AMP from adenosine: step 1/1. Functionally, ATP-dependent phosphorylation of adenosine and other related nucleoside analogs to monophosphate derivatives. It is a key purine metabolic enzyme in the opportunistic parasitic protozoan toxoplasma gondii as it cannot synthesize purines de novo. The protein is Adenosine kinase (AK) of Toxoplasma gondii.